Reading from the N-terminus, the 357-residue chain is 3-isopropylmalate dehydrogenase (357 aa).

Substrate contacts are provided by Arg97, Arg107, Arg135, and Asp224. Positions 224, 248, and 252 each coordinate Mg(2+). Position 282-294 (282-294 (GSAPDIAGQDKAN)) interacts with NAD(+).

It belongs to the isocitrate and isopropylmalate dehydrogenases family. LeuB type 1 subfamily. As to quaternary structure, homodimer. Requires Mg(2+) as cofactor. It depends on Mn(2+) as a cofactor.

The protein resides in the cytoplasm. The enzyme catalyses (2R,3S)-3-isopropylmalate + NAD(+) = 4-methyl-2-oxopentanoate + CO2 + NADH. Its pathway is amino-acid biosynthesis; L-leucine biosynthesis; L-leucine from 3-methyl-2-oxobutanoate: step 3/4. Functionally, catalyzes the oxidation of 3-carboxy-2-hydroxy-4-methylpentanoate (3-isopropylmalate) to 3-carboxy-4-methyl-2-oxopentanoate. The product decarboxylates to 4-methyl-2 oxopentanoate. The sequence is that of 3-isopropylmalate dehydrogenase from Synechococcus sp. (strain CC9902).